The primary structure comprises 339 residues: Phomopsene synthase (339 aa).

Residues Asp-89, Asp-94, Asn-224, Ser-228, and Glu-232 each contribute to the Mg(2+) site.

This sequence belongs to the terpene synthase family. Requires Mg(2+) as cofactor.

The catalysed reaction is (2E,6E,10E)-geranylgeranyl diphosphate = phomopsene + diphosphate. It carries out the reaction (2E,6E,10E)-geranylgeranyl diphosphate = allokutznerene + diphosphate. It functions in the pathway secondary metabolite biosynthesis; terpenoid biosynthesis. Functionally, diterpene synthase that catalyzes the conversion of geranylgeranyl diphosphate (GGPP) to phomopsene, a diterpene previously reported from the fungus P.amygdali. Phomopsene is the main product, but the enzyme can also produce allokutznerene (about 50% of phomopsene production activity) and traces of spiroviolene. Cannot use geranyl diphosphate (GPP), farnesyl diphosphate (FPP) and geranylfarnesyl diphosphate (GFPP). This Allokutzneria albata (Kibdelosporangium albatum) protein is Phomopsene synthase.